Here is a 479-residue protein sequence, read N- to C-terminus: Aspartyl/glutamyl-tRNA(Asn/Gln) amidotransferase subunit B (479 aa).

The protein belongs to the GatB/GatE family. GatB subfamily. As to quaternary structure, heterotrimer of A, B and C subunits.

The enzyme catalyses L-glutamyl-tRNA(Gln) + L-glutamine + ATP + H2O = L-glutaminyl-tRNA(Gln) + L-glutamate + ADP + phosphate + H(+). It catalyses the reaction L-aspartyl-tRNA(Asn) + L-glutamine + ATP + H2O = L-asparaginyl-tRNA(Asn) + L-glutamate + ADP + phosphate + 2 H(+). Allows the formation of correctly charged Asn-tRNA(Asn) or Gln-tRNA(Gln) through the transamidation of misacylated Asp-tRNA(Asn) or Glu-tRNA(Gln) in organisms which lack either or both of asparaginyl-tRNA or glutaminyl-tRNA synthetases. The reaction takes place in the presence of glutamine and ATP through an activated phospho-Asp-tRNA(Asn) or phospho-Glu-tRNA(Gln). This is Aspartyl/glutamyl-tRNA(Asn/Gln) amidotransferase subunit B from Myxococcus xanthus (strain DK1622).